We begin with the raw amino-acid sequence, 276 residues long: NAD-capped RNA hydrolase NudC (276 aa).

Arg82 serves as a coordination point for substrate. Cys112 and Cys115 together coordinate Zn(2+). Glu125 is a substrate binding site. Zn(2+) is bound by residues Cys130 and Cys133. Tyr138 is a binding site for substrate. One can recognise a Nudix hydrolase domain in the interval 139-262; the sequence is PRLSPSMIVL…SIARYLIELY (124 aa). The a divalent metal cation site is built by Ala172, Glu188, and Glu192. A Nudix box motif is present at residues 173 to 194; sequence GYVEPGESVEQCVAREVREEVG. Residue 206–213 participates in substrate binding; sequence QGWPFPHS. Glu233 is an a divalent metal cation binding site. Ala255 lines the substrate pocket.

Belongs to the Nudix hydrolase family. NudC subfamily. In terms of assembly, homodimer. Requires Mg(2+) as cofactor. The cofactor is Mn(2+). It depends on Zn(2+) as a cofactor.

The enzyme catalyses a 5'-end NAD(+)-phospho-ribonucleoside in mRNA + H2O = a 5'-end phospho-adenosine-phospho-ribonucleoside in mRNA + beta-nicotinamide D-ribonucleotide + 2 H(+). The catalysed reaction is NAD(+) + H2O = beta-nicotinamide D-ribonucleotide + AMP + 2 H(+). It catalyses the reaction NADH + H2O = reduced beta-nicotinamide D-ribonucleotide + AMP + 2 H(+). Its function is as follows. mRNA decapping enzyme that specifically removes the nicotinamide adenine dinucleotide (NAD) cap from a subset of mRNAs by hydrolyzing the diphosphate linkage to produce nicotinamide mononucleotide (NMN) and 5' monophosphate mRNA. The NAD-cap is present at the 5'-end of some mRNAs and stabilizes RNA against 5'-processing. Has preference for mRNAs with a 5'-end purine. Catalyzes the hydrolysis of a broad range of dinucleotide pyrophosphates. This Stutzerimonas stutzeri (strain A1501) (Pseudomonas stutzeri) protein is NAD-capped RNA hydrolase NudC.